A 436-amino-acid chain; its full sequence is ATP-dependent RNA helicase RhlB (436 aa).

The Q motif signature appears at Q9–A37. A Helicase ATP-binding domain is found at L40–V219. A53 to T60 is a binding site for ATP. The DEAD box motif lies at D165–D168. One can recognise a Helicase C-terminal domain in the interval K243 to L390. Residues D392–S436 form a disordered region. The span at G425–S436 shows a compositional bias: basic residues.

It belongs to the DEAD box helicase family. RhlB subfamily. Component of the RNA degradosome, which is a multiprotein complex involved in RNA processing and mRNA degradation.

It is found in the cytoplasm. The enzyme catalyses ATP + H2O = ADP + phosphate + H(+). Its function is as follows. DEAD-box RNA helicase involved in RNA degradation. Has RNA-dependent ATPase activity and unwinds double-stranded RNA. The polypeptide is ATP-dependent RNA helicase RhlB (Shewanella halifaxensis (strain HAW-EB4)).